The primary structure comprises 792 residues: G-type lectin S-receptor-like serine/threonine-protein kinase At1g61440 (792 aa).

An N-terminal signal peptide occupies residues 1–17; sequence MGKKRIVLLLFISFSYA. Residues 18 to 137 form the Bulb-type lectin domain; the sequence is EITKESPLSI…VTGRTLWESF (120 aa). Over 18-419 the chain is Extracellular; it reads EITKESPLSI…ELDVHKRKMT (402 aa). 3 N-linked (GlcNAc...) asparagine glycosylation sites follow: asparagine 46, asparagine 127, and asparagine 229. The EGF-like; atypical domain occupies 271 to 307; that stretch reads PANSCDIYGVCGPFGFCVISDPPKCKCFKGFVPKSIE. Cystine bridges form between cysteine 275–cysteine 287 and cysteine 281–cysteine 295. Residues asparagine 313, asparagine 329, and asparagine 368 are each glycosylated (N-linked (GlcNAc...) asparagine). The region spanning 326-408 is the PAN domain; sequence CQGNSTGKDA…GEILSIRLAH (83 aa). Intrachain disulfides connect cysteine 361/cysteine 382 and cysteine 365/cysteine 371. Residues 420-440 traverse the membrane as a helical segment; the sequence is IVASTVSLTLFVILGFATFGF. Over 441 to 792 the chain is Cytoplasmic; the sequence is WRNRVKHHDA…EMTESVILGR (352 aa). The region spanning 478-763 is the Protein kinase domain; sequence FSLSNKLGHG…DLPLPKQPTF (286 aa). Residues 484 to 492 and lysine 506 contribute to the ATP site; that span reads LGHGGFGSV. Phosphoserine occurs at positions 512 and 527. The interval 567–584 is caM-binding; sequence RKRLELDWPKRFDIIQGI. Aspartate 603 acts as the Proton acceptor in catalysis. Residues serine 607 and serine 620 each carry the phosphoserine modification. Threonine 637 is subject to Phosphothreonine. Residues serine 680 and serine 774 each carry the phosphoserine modification.

It belongs to the protein kinase superfamily. Ser/Thr protein kinase family.

The protein resides in the cell membrane. It carries out the reaction L-seryl-[protein] + ATP = O-phospho-L-seryl-[protein] + ADP + H(+). It catalyses the reaction L-threonyl-[protein] + ATP = O-phospho-L-threonyl-[protein] + ADP + H(+). This Arabidopsis thaliana (Mouse-ear cress) protein is G-type lectin S-receptor-like serine/threonine-protein kinase At1g61440.